The chain runs to 200 residues: Lipid A acyltransferase PagP (200 aa).

The N-terminal stretch at 1 to 24 (MRLKLTSHTCLFALSSLLVTPAFA) is a signal peptide. Catalysis depends on residues H72, D115, and S116.

Belongs to the lipid A palmitoyltransferase family. As to quaternary structure, homodimer.

The protein localises to the cell outer membrane. It catalyses the reaction a lipid A + a 1,2-diacyl-sn-glycero-3-phosphocholine = a hepta-acyl lipid A + a 2-acyl-sn-glycero-3-phosphocholine. The enzyme catalyses a lipid IVA + a 1,2-diacyl-sn-glycero-3-phosphocholine = a lipid IVB + a 2-acyl-sn-glycero-3-phosphocholine. The catalysed reaction is a lipid IIA + a 1,2-diacyl-sn-glycero-3-phosphocholine = a lipid IIB + a 2-acyl-sn-glycero-3-phosphocholine. Transfers a fatty acid residue from the sn-1 position of a phospholipid to the N-linked hydroxyfatty acid chain on the proximal unit of lipid A or its precursors. The polypeptide is Lipid A acyltransferase PagP (Dickeya dadantii (strain 3937) (Erwinia chrysanthemi (strain 3937))).